The primary structure comprises 422 residues: MSEDKPHQNLAVIGHVDHGKSTMVGRLLFETGSVPEHVIEQYREEAEEKGKGGFEFAYVMDNLAEERERGVTIDIAHQEFDTDEYYFTIVDCPGHRDFVKNMITGASQADNAVLVVAADDGVQPQTQEHVFLARTLGIDELIIAVNKMDLVDYDENKYKAVVDEVNQLLEQVRFNTEDAKFIPTSAFEGDNVSEASENTSWYDGPSLLEALNDLPEPQPPTDAPLRLPIQDVYTISGIGTVPVGRVETGILNTGDNVSFQPSDVSGEVKTVEMHHEEVPKAEPGDNVGFNVRGVGKDDIRRGDVCGPADDPPSVAETFQAQVVVMQHPSVITAGYTPVFHAHTAQVACTIESIDKKIDPSSGEVAEENPDFIQSGDAAVVTVRPQKPLSIESSNEIPELGSFAIRDMGQTVAAGKVLSVNER.

Residues 5-221 (KPHQNLAVIG…NDLPEPQPPT (217 aa)) enclose the tr-type G domain. The interval 14–21 (GHVDHGKS) is G1. 14 to 21 (GHVDHGKS) provides a ligand contact to GTP. Serine 21 serves as a coordination point for Mg(2+). The segment at 70-74 (GVTID) is G2. Residues 91 to 94 (DCPG) are G3. GTP is bound by residues 91-95 (DCPGH) and 146-149 (NKMD). Residues 146 to 149 (NKMD) form a G4 region. A G5 region spans residues 185–187 (SAF).

It belongs to the TRAFAC class translation factor GTPase superfamily. Classic translation factor GTPase family. EF-Tu/EF-1A subfamily.

The protein resides in the cytoplasm. It catalyses the reaction GTP + H2O = GDP + phosphate + H(+). GTP hydrolase that promotes the GTP-dependent binding of aminoacyl-tRNA to the A-site of ribosomes during protein biosynthesis. In Natronomonas pharaonis (strain ATCC 35678 / DSM 2160 / CIP 103997 / JCM 8858 / NBRC 14720 / NCIMB 2260 / Gabara) (Halobacterium pharaonis), this protein is Elongation factor 1-alpha.